Here is a 611-residue protein sequence, read N- to C-terminus: Mitochondrial distribution and morphology protein 34 (611 aa).

The 195-residue stretch at 1 to 195 (MAFNFNWSPL…LPAIIHRLSL (195 aa)) folds into the SMP-LTD domain. Residues 325-342 (SAPLSSQDTASVASSQSR) show a composition bias toward polar residues. Disordered regions lie at residues 325 to 347 (SAPL…GLPS), 361 to 402 (RHSK…STIT), 415 to 544 (SIIP…PTYT), and 587 to 611 (SYVG…AYRH). The span at 361–373 (RHSKAHARKRKKR) shows a compositional bias: basic residues. 2 stretches are compositionally biased toward basic and acidic residues: residues 374–385 (VIDLRPHRKPTD) and 444–459 (TLRD…ERTN). The segment covering 520-529 (PLGPPAPAPI) has biased composition (pro residues).

Belongs to the MDM34 family. As to quaternary structure, component of the ER-mitochondria encounter structure (ERMES) or MDM complex, composed of MMM1, MDM10, MDM12 and MDM34.

It localises to the mitochondrion outer membrane. Functionally, component of the ERMES/MDM complex, which serves as a molecular tether to connect the endoplasmic reticulum (ER) and mitochondria. Components of this complex are involved in the control of mitochondrial shape and protein biogenesis, and function in nonvesicular lipid trafficking between the ER and mitochondria. MDM34 is required for the interaction of the ER-resident membrane protein MMM1 and the outer mitochondrial membrane-resident beta-barrel protein MDM10. This Paracoccidioides brasiliensis (strain Pb18) protein is Mitochondrial distribution and morphology protein 34.